Here is a 118-residue protein sequence, read N- to C-terminus: Light-harvesting protein B-800/850 gamma chain (118 aa).

Its function is as follows. Seems to be required for the LH-II stabilization. In Rhodobacter capsulatus (Rhodopseudomonas capsulata), this protein is Light-harvesting protein B-800/850 gamma chain (pucE).